The chain runs to 327 residues: Urease accessory protein UreD (327 aa).

It belongs to the UreD family. In terms of assembly, ureD, UreF and UreG form a complex that acts as a GTP-hydrolysis-dependent molecular chaperone, activating the urease apoprotein by helping to assemble the nickel containing metallocenter of UreC. The UreE protein probably delivers the nickel.

The protein localises to the cytoplasm. Its function is as follows. Required for maturation of urease via the functional incorporation of the urease nickel metallocenter. This is Urease accessory protein UreD from Yersinia enterocolitica serotype O:8 / biotype 1B (strain NCTC 13174 / 8081).